We begin with the raw amino-acid sequence, 478 residues long: Transposase for insertion sequence element IS231E (478 aa).

The protein belongs to the transposase 11 family.

In terms of biological role, involved in the transposition of the insertion sequence. The sequence is that of Transposase for insertion sequence element IS231E from Bacillus thuringiensis subsp. finitimus.